The sequence spans 150 residues: Cell division protein SepF (150 aa).

The interval 26-45 (DREEIPEEHESKDRTAYQSK) is disordered.

It belongs to the SepF family. Homodimer. Interacts with FtsZ.

It is found in the cytoplasm. Its function is as follows. Cell division protein that is part of the divisome complex and is recruited early to the Z-ring. Probably stimulates Z-ring formation, perhaps through the cross-linking of FtsZ protofilaments. Its function overlaps with FtsA. The chain is Cell division protein SepF from Bacillus licheniformis (strain ATCC 14580 / DSM 13 / JCM 2505 / CCUG 7422 / NBRC 12200 / NCIMB 9375 / NCTC 10341 / NRRL NRS-1264 / Gibson 46).